Here is a 105-residue protein sequence, read N- to C-terminus: Replication restart protein PriB (105 aa).

Residues 1 to 102 enclose the SSB domain; that stretch reads MTTNRLVLSG…LHAEQIELID (102 aa).

It belongs to the PriB family. As to quaternary structure, homodimer. Interacts with PriA and DnaT. Component of the replication restart primosome. Primosome assembly occurs via a 'hand-off' mechanism. PriA binds to replication forks, subsequently PriB then DnaT bind; DnaT then displaces ssDNA to generate the helicase loading substrate.

In terms of biological role, involved in the restart of stalled replication forks, which reloads the replicative helicase on sites other than the origin of replication; the PriA-PriB pathway is the major replication restart pathway. During primosome assembly it facilitates complex formation between PriA and DnaT on DNA; stabilizes PriA on DNA. Stimulates the DNA unwinding activity of PriA helicase. This chain is Replication restart protein PriB, found in Photorhabdus laumondii subsp. laumondii (strain DSM 15139 / CIP 105565 / TT01) (Photorhabdus luminescens subsp. laumondii).